The sequence spans 124 residues: Modulator protein MzrA (124 aa).

At 1 to 7 (MINRRMK) the chain is on the cytoplasmic side. The helical transmembrane segment at 8-28 (TGFVFHLLLLLLPLVVLVTSS) threads the bilayer. Over 29–124 (RRTADDVTLH…KLSQQPFKLG (96 aa)) the chain is Periplasmic.

Belongs to the MzrA family. In terms of assembly, interacts with EnvZ.

The protein localises to the cell inner membrane. Its function is as follows. Modulates the activity of the EnvZ/OmpR two-component regulatory system, probably by directly modulating EnvZ enzymatic activity and increasing stability of phosphorylated OmpR. In Musicola paradisiaca (strain Ech703) (Dickeya paradisiaca), this protein is Modulator protein MzrA.